We begin with the raw amino-acid sequence, 382 residues long: Protein arginine N-methyltransferase PRMT10 (382 aa).

The interval 1–21 is disordered; that stretch reads MASLPNGAASASAASSAAGGG. Positions 7-17 are enriched in low complexity; it reads GAASASAASSA. In terms of domain architecture, SAM-dependent MTase PRMT-type spans 28–359; that stretch reads EVDFANYFCT…KENHRLMDME (332 aa). Residues Glu142 and Glu151 contribute to the active site. The interval 189 to 229 is dimerization arm; it reads ENKMEDLEIAMHDWNLFVEDTESYYGVNMNVLTKAYRAEHE.

This sequence belongs to the class I-like SAM-binding methyltransferase superfamily. Protein arginine N-methyltransferase family. In terms of assembly, ring-like homodimer.

It carries out the reaction L-arginyl-[protein] + 2 S-adenosyl-L-methionine = N(omega),N(omega)-dimethyl-L-arginyl-[protein] + 2 S-adenosyl-L-homocysteine + 2 H(+). Methylates (mono and asymmetric dimethylation) the guanidino nitrogens of arginyl residues in some proteins. This is Protein arginine N-methyltransferase PRMT10 (PRMT10) from Oryza sativa subsp. indica (Rice).